A 347-amino-acid polypeptide reads, in one-letter code: MTTKMFYDKDIDTTPLENKKIAVIGYGAQGHAQANNLRDSGFDVIMGLRPGKSFDSAKKDGFEVYSAAEATAQADVVMMETPDELQAAVWEKEVEPNLKAGSYLGFSHGFNIVYGLIKPNADINVMIIAPKGPGNIERRQFVEGGGIPSLYGVHQDPTGDTAEVAKAYAKGIGSGRAGILETTFEEETTEDLFGEQAVLCGGLTQLIEAGFNTLVEAGYSPELAYFETSHEMKMIVDLIFEGGFEKMRHDCSNTCEYGEMLNGPRIITEESKQGMRDVLKDIQDGTYAKKWLAEYNSGLKDLEKMRTEYKSGLYEQTGKKVRAMMPWISDADKYSTAADTEQFSAAK.

Positions 3–182 (TKMFYDKDID…GSGRAGILET (180 aa)) constitute a KARI N-terminal Rossmann domain. Residues 26–29 (YGAQ), R49, S53, and 83–86 (DELQ) contribute to the NADP(+) site. The active site involves H108. An NADP(+)-binding site is contributed by G134. The 146-residue stretch at 183–328 (TFEEETTEDL…KKVRAMMPWI (146 aa)) folds into the KARI C-terminal knotted domain. 4 residues coordinate Mg(2+): D191, E195, E227, and E231. S252 contacts substrate.

It belongs to the ketol-acid reductoisomerase family. Mg(2+) serves as cofactor.

The enzyme catalyses (2R)-2,3-dihydroxy-3-methylbutanoate + NADP(+) = (2S)-2-acetolactate + NADPH + H(+). It carries out the reaction (2R,3R)-2,3-dihydroxy-3-methylpentanoate + NADP(+) = (S)-2-ethyl-2-hydroxy-3-oxobutanoate + NADPH + H(+). Its pathway is amino-acid biosynthesis; L-isoleucine biosynthesis; L-isoleucine from 2-oxobutanoate: step 2/4. It functions in the pathway amino-acid biosynthesis; L-valine biosynthesis; L-valine from pyruvate: step 2/4. Functionally, involved in the biosynthesis of branched-chain amino acids (BCAA). Catalyzes an alkyl-migration followed by a ketol-acid reduction of (S)-2-acetolactate (S2AL) to yield (R)-2,3-dihydroxy-isovalerate. In the isomerase reaction, S2AL is rearranged via a Mg-dependent methyl migration to produce 3-hydroxy-3-methyl-2-ketobutyrate (HMKB). In the reductase reaction, this 2-ketoacid undergoes a metal-dependent reduction by NADPH to yield (R)-2,3-dihydroxy-isovalerate. This Leuconostoc mesenteroides subsp. mesenteroides (strain ATCC 8293 / DSM 20343 / BCRC 11652 / CCM 1803 / JCM 6124 / NCDO 523 / NBRC 100496 / NCIMB 8023 / NCTC 12954 / NRRL B-1118 / 37Y) protein is Ketol-acid reductoisomerase (NADP(+)).